Here is a 1624-residue protein sequence, read N- to C-terminus: Pappalysin-1 (1624 aa).

Residues 1–22 form the signal peptide; the sequence is MRLWSWVLRLGLLSAALGCGLA. A propeptide spanning residues 23–81 is cleaved from the precursor; the sequence is ERPRRVRRDPRAVRPPRPAAGPATCATRAARGRRASPPPPPGGAWEAVRVPRRRQQRAA. A disordered region spans residues 28 to 93; it reads VRRDPRAVRP…AEEPSPPSRA (66 aa). Over residues 42 to 51 the composition is skewed to low complexity; sequence AGPATCATRA. 17 cysteine pairs are disulfide-bonded: Cys-141–Cys-232, Cys-324–Cys-619, Cys-329–Cys-654, Cys-411–Cys-425, Cys-421–Cys-437, Cys-454–Cys-470, Cys-471–Cys-482, Cys-580–Cys-597, Cys-584–Cys-609, Cys-707–Cys-875, Cys-710–Cys-878, Cys-750–Cys-832, Cys-772–Cys-778, Cys-944–Cys-972, Cys-957–Cys-968, Cys-980–Cys-987, and Cys-996–Cys-1008. A metalloprotease region spans residues 272–583; sequence RGLHTPLPQL…ISEIQSCSDP (312 aa). N-linked (GlcNAc...) asparagine glycans are attached at residues Asn-387 and Asn-398. The N-linked (GlcNAc...) asparagine glycan is linked to Asn-426. N-linked (GlcNAc...) asparagine glycosylation is present at Asn-516. His-559 is a Zn(2+) binding site. The active site involves Glu-560. Zn(2+) contacts are provided by His-563 and His-569. N-linked (GlcNAc...) asparagine glycans are attached at residues Asn-598, Asn-616, and Asn-722. Asn-822 is a glycosylation site (N-linked (GlcNAc...) asparagine). N-linked (GlcNAc...) asparagine glycosylation is present at Asn-1023. 19 cysteine pairs are disulfide-bonded: Cys-1033–Cys-1067, Cys-1048–Cys-1136, Cys-1189–Cys-1202, Cys-1212–Cys-1266, Cys-1224–Cys-1235, Cys-1239–Cys-1277, Cys-1282–Cys-1326, Cys-1297–Cys-1307, Cys-1311–Cys-1339, Cys-1343–Cys-1396, Cys-1359–Cys-1370, Cys-1374–Cys-1407, Cys-1412–Cys-1455, Cys-1425–Cys-1435, Cys-1439–Cys-1468, Cys-1475–Cys-1536, Cys-1489–Cys-1499, Cys-1503–Cys-1551, and Cys-1555–Cys-1573. 5 Sushi domains span residues 1210-1279, 1280-1341, 1342-1409, 1410-1470, and 1473-1553; these read ADCP…ACEP, VDCG…LCEL, MCLA…TCVP, VTCD…VCRE, and GQCS…HCVK. N-linked (GlcNAc...) asparagine glycosylation is found at Asn-1219 and Asn-1223. Residue Asn-1320 is glycosylated (N-linked (GlcNAc...) asparagine). Asn-1516 is a glycosylation site (N-linked (GlcNAc...) asparagine).

The protein belongs to the peptidase M43B family. Homodimer; disulfide-linked. In pregnancy serum, predominantly found as a disulfide-linked 2:2 heterotetramer with the proform of PRG2. It depends on Zn(2+) as a cofactor. In terms of tissue distribution, detected in kidney, spleen, brain, ovary, breast, skin, prostate, uterus, and placenta.

It is found in the secreted. It carries out the reaction Cleavage of the 135-Met-|-Lys-136 bond in insulin-like growth factor binding protein (IGFBP)-4, and the 143-Ser-|-Lys-144 bond in IGFBP-5.. Its function is as follows. Metalloproteinase which specifically cleaves IGFBP-4 and IGFBP-5, resulting in release of bound IGF. Cleavage of IGFBP-4 is dramatically enhanced by the presence of IGF, whereas cleavage of IGFBP-5 is slightly inhibited by the presence of IGF. Isoform 2 cleaves IGFBP-4 very slowly compared to PAPP-A, but its ability to cleave IGFBP-5 is unaffected. The chain is Pappalysin-1 (Pappa) from Mus musculus (Mouse).